Reading from the N-terminus, the 358-residue chain is UDP-N-acetylglucosamine--N-acetylmuramyl-(pentapeptide) pyrophosphoryl-undecaprenol N-acetylglucosamine transferase (358 aa).

UDP-N-acetyl-alpha-D-glucosamine contacts are provided by residues 11–13 (TGG), asparagine 120, arginine 161, serine 188, and glutamine 282.

Belongs to the glycosyltransferase 28 family. MurG subfamily.

It localises to the cell inner membrane. The catalysed reaction is di-trans,octa-cis-undecaprenyl diphospho-N-acetyl-alpha-D-muramoyl-L-alanyl-D-glutamyl-meso-2,6-diaminopimeloyl-D-alanyl-D-alanine + UDP-N-acetyl-alpha-D-glucosamine = di-trans,octa-cis-undecaprenyl diphospho-[N-acetyl-alpha-D-glucosaminyl-(1-&gt;4)]-N-acetyl-alpha-D-muramoyl-L-alanyl-D-glutamyl-meso-2,6-diaminopimeloyl-D-alanyl-D-alanine + UDP + H(+). Its pathway is cell wall biogenesis; peptidoglycan biosynthesis. Functionally, cell wall formation. Catalyzes the transfer of a GlcNAc subunit on undecaprenyl-pyrophosphoryl-MurNAc-pentapeptide (lipid intermediate I) to form undecaprenyl-pyrophosphoryl-MurNAc-(pentapeptide)GlcNAc (lipid intermediate II). The chain is UDP-N-acetylglucosamine--N-acetylmuramyl-(pentapeptide) pyrophosphoryl-undecaprenol N-acetylglucosamine transferase from Synechococcus sp. (strain CC9605).